We begin with the raw amino-acid sequence, 31 residues long: Cytochrome b6-f complex subunit 6 (31 aa).

The helical transmembrane segment at 4 to 24 (ITSYFGFLLAALTITSAIFIG) threads the bilayer.

The protein belongs to the PetL family. As to quaternary structure, the 4 large subunits of the cytochrome b6-f complex are cytochrome b6, subunit IV (17 kDa polypeptide, PetD), cytochrome f and the Rieske protein, while the 4 small subunits are PetG, PetL, PetM and PetN. The complex functions as a dimer.

It localises to the plastid. Its subcellular location is the chloroplast thylakoid membrane. Its function is as follows. Component of the cytochrome b6-f complex, which mediates electron transfer between photosystem II (PSII) and photosystem I (PSI), cyclic electron flow around PSI, and state transitions. PetL is important for photoautotrophic growth as well as for electron transfer efficiency and stability of the cytochrome b6-f complex. The polypeptide is Cytochrome b6-f complex subunit 6 (Ficus carica (Common fig)).